A 287-amino-acid polypeptide reads, in one-letter code: Protease HtpX (287 aa).

2 helical membrane-spanning segments follow: residues Ile4–Ile24 and Gly33–Ile53. Zn(2+) is bound at residue His139. Glu140 is an active-site residue. Residue His143 participates in Zn(2+) binding. A run of 2 helical transmembrane segments spans residues Leu154 to Ile174 and Ala195 to Phe215. Residue Glu220 coordinates Zn(2+).

The protein belongs to the peptidase M48B family. It depends on Zn(2+) as a cofactor.

The protein localises to the cell inner membrane. In Shewanella baltica (strain OS185), this protein is Protease HtpX.